The sequence spans 196 residues: Lipoprotein signal peptidase (196 aa).

Residues Met1–Ser24 are disordered. 3 helical membrane passes run Ile40–Leu60, Ile92–Phe112, and Leu118–Leu138. Active-site residues include Asp155 and Asp169. A helical transmembrane segment spans residues Val164–Phe184.

This sequence belongs to the peptidase A8 family.

The protein resides in the cell membrane. It catalyses the reaction Release of signal peptides from bacterial membrane prolipoproteins. Hydrolyzes -Xaa-Yaa-Zaa-|-(S,diacylglyceryl)Cys-, in which Xaa is hydrophobic (preferably Leu), and Yaa (Ala or Ser) and Zaa (Gly or Ala) have small, neutral side chains.. The protein operates within protein modification; lipoprotein biosynthesis (signal peptide cleavage). Its function is as follows. This protein specifically catalyzes the removal of signal peptides from prolipoproteins. This chain is Lipoprotein signal peptidase, found in Streptomyces griseus subsp. griseus (strain JCM 4626 / CBS 651.72 / NBRC 13350 / KCC S-0626 / ISP 5235).